Consider the following 139-residue polypeptide: Membrane protein YqfB (139 aa).

The chain crosses the membrane as a helical span at residues 3–23 (DLLTNPLIIAAIIGIISAIFG). Positions 25-87 (KSKEEKQNSQ…TARNLKGLER (63 aa)) are disordered. Positions 62–97 (NRMEQARREAEERRRETARNLKGLERDLAAAKQKTV) form a coiled coil. The segment covering 65–87 (EQARREAEERRRETARNLKGLER) has biased composition (basic and acidic residues).

The protein resides in the cell membrane. This Bacillus subtilis (strain 168) protein is Membrane protein YqfB (yqfB).